The sequence spans 298 residues: Protein FAM221A (298 aa).

Residues 241-257 (SSPETLTDVGTSSQVSS) show a composition bias toward polar residues. The segment at 241–263 (SSPETLTDVGTSSQVSSLRRPEE) is disordered.

Belongs to the FAM221 family.

This chain is Protein FAM221A (FAM221A), found in Homo sapiens (Human).